The sequence spans 457 residues: Transcription factor CP2-like protein 1 (457 aa).

A mediate transcriptional repression region spans residues 1-52 (MLFWHTQPEHYNQHNSGSYLRDVLALPIFKQEEPQLSPENEARLPPLQYVLC). The Grh/CP2 DB domain maps to 43 to 280 (RLPPLQYVLC…PSPSYNGSPN (238 aa)). Disordered regions lie at residues 219–245 (KPKG…KEKY) and 271–301 (PSPS…LPVG). Residues 221–245 (KGADRKQETDREKMEKRTAQEKEKY) show a composition bias toward basic and acidic residues. Positions 261 to 365 (PDVAYQVNSA…IRLFNAIKGR (105 aa)) are SAM2-like domain. Residues 271 to 281 (PSPSYNGSPNS) are compositionally biased toward polar residues.

This sequence belongs to the grh/CP2 family. CP2 subfamily. In terms of assembly, forms homohexamers via its SAM-like domain. Interacts with MTA1; which is indispensable for TFCP2L1-mediated self-renewal-promoting effect and endoderm-inhibiting action.

It localises to the nucleus. In terms of biological role, transcription factor that facilitates establishment and maintenance of pluripotency in embryonic stem cells (ESCs). With KLF2, acts as the major effector of self-renewal that mediates induction of pluripotency downstream of LIF/STAT3 and Wnt/beta-catenin signaling. Required for normal duct development in the salivary gland and kidney. Coordinates the development of the kidney collecting ducts intercalated (IC) and principal (PC) cells, which regulate acid-base and salt-water homeostasis, respectively. Regulates the expression of IC genes including subunits B1 and D2 of the V-ATPase complex, OXGR1, CA12, SLC4A1, AQP6 and IC-specific transcription factor FOXI1. Also regulates the expression of JAG1 and subsequent notch signaling in the collecting duct. JAG1 initiates notch signaling in PCs but inhibits notch signaling in ICs. Acts as a transcriptional suppressor that may suppress UBP1-mediated transcriptional activation. Modulates the placental expression of CYP11A1. In Pongo abelii (Sumatran orangutan), this protein is Transcription factor CP2-like protein 1 (TFCP2L1).